Consider the following 424-residue polypeptide: Serine--tRNA ligase (424 aa).

230-232 is a binding site for L-serine; sequence TAE. 261 to 263 lines the ATP pocket; the sequence is RAE. Glu-284 is an L-serine binding site. 348–351 is a binding site for ATP; the sequence is EISS. Ser-384 is an L-serine binding site.

It belongs to the class-II aminoacyl-tRNA synthetase family. Type-1 seryl-tRNA synthetase subfamily. In terms of assembly, homodimer. The tRNA molecule binds across the dimer.

It is found in the cytoplasm. It carries out the reaction tRNA(Ser) + L-serine + ATP = L-seryl-tRNA(Ser) + AMP + diphosphate + H(+). It catalyses the reaction tRNA(Sec) + L-serine + ATP = L-seryl-tRNA(Sec) + AMP + diphosphate + H(+). Its pathway is aminoacyl-tRNA biosynthesis; selenocysteinyl-tRNA(Sec) biosynthesis; L-seryl-tRNA(Sec) from L-serine and tRNA(Sec): step 1/1. Its function is as follows. Catalyzes the attachment of serine to tRNA(Ser). Is also able to aminoacylate tRNA(Sec) with serine, to form the misacylated tRNA L-seryl-tRNA(Sec), which will be further converted into selenocysteinyl-tRNA(Sec). The polypeptide is Serine--tRNA ligase (Desulforamulus reducens (strain ATCC BAA-1160 / DSM 100696 / MI-1) (Desulfotomaculum reducens)).